The primary structure comprises 445 residues: Nuclear envelope integral membrane protein 1 (445 aa).

The N-terminal stretch at 1–44 (MAGGMKVAVLPAVGAGPWSWGAGGCGAVRLLLVLFGCFVCGSAG) is a signal peptide. Asn125 carries an N-linked (GlcNAc...) asparagine glycan. A run of 5 helical transmembrane segments spans residues 161 to 181 (PKLF…DLLS), 186 to 206 (FYYS…IIFI), 216 to 236 (PIYI…QLVF), 245 to 265 (CYWQ…FAVC), and 289 to 309 (LCFM…VVIA). Positions 186–297 (FYYSTGMSVG…GLCFMYSSIQ (112 aa)) are a; required for its colocalization with lamins at the nuclear envelope. Residues 336–405 (TVPPRLLTEE…LTPNEVSVHE (70 aa)) form a b; required for interaction with RAN-GTP region. A required for nuclear localization region spans residues 336-445 (TVPPRLLTEE…LVVQQNSFLT (110 aa)). Phosphoserine is present on residues Ser368, Ser424, and Ser425. Over residues 418-430 (ELSEETSSEEEDS) the composition is skewed to acidic residues. A disordered region spans residues 418 to 445 (ELSEETSSEEEDSDSRYPLVVQQNSFLT).

This sequence belongs to the NEMP family. As to quaternary structure, homooligomer. Interacts with RAN-GTP. Interacts with EMD. Post-translationally, phosphorylation may regulate its interaction with RAN-GTP.

Its subcellular location is the nucleus inner membrane. The protein resides in the nucleus envelope. Its function is as follows. Together with EMD, contributes to nuclear envelope stiffness in germ cells. Required for female fertility. Essential for normal erythropoiesis. Required for efficient nuclear envelope opening and enucleation during the late stages of erythroblast maturation. The protein is Nuclear envelope integral membrane protein 1 (NEMP1) of Bos taurus (Bovine).